The chain runs to 333 residues: UDP-N-acetylenolpyruvoylglucosamine reductase (333 aa).

The FAD-binding PCMH-type domain occupies 12–176 (LPAQCRALIE…TSVVFRLPKD (165 aa)). Residue arginine 153 is part of the active site. Residue serine 221 is the Proton donor of the active site. Glutamate 317 is an active-site residue.

The protein belongs to the MurB family. The cofactor is FAD.

Its subcellular location is the cytoplasm. The catalysed reaction is UDP-N-acetyl-alpha-D-muramate + NADP(+) = UDP-N-acetyl-3-O-(1-carboxyvinyl)-alpha-D-glucosamine + NADPH + H(+). It participates in cell wall biogenesis; peptidoglycan biosynthesis. Its function is as follows. Cell wall formation. In Idiomarina loihiensis (strain ATCC BAA-735 / DSM 15497 / L2-TR), this protein is UDP-N-acetylenolpyruvoylglucosamine reductase.